The chain runs to 119 residues: Large ribosomal subunit protein bL20 (119 aa).

It belongs to the bacterial ribosomal protein bL20 family.

Its function is as follows. Binds directly to 23S ribosomal RNA and is necessary for the in vitro assembly process of the 50S ribosomal subunit. It is not involved in the protein synthesizing functions of that subunit. The sequence is that of Large ribosomal subunit protein bL20 from Bordetella petrii (strain ATCC BAA-461 / DSM 12804 / CCUG 43448).